The chain runs to 335 residues: Solute-binding protein Veis_3954 (335 aa).

The first 34 residues, 1–34, serve as a signal peptide directing secretion; the sequence is MPSTRPLPRPSSRSLRRLALGLGLAFGLGATAAA. (R)-pantoate is bound by residues Gln50, Glu82, 155-158, Arg179, and Asn219; that span reads NGFR.

This sequence belongs to the bacterial solute-binding protein 7 family. The complex is comprised of an extracytoplasmic solute-binding protein and a heteromeric permease formed by two transmembrane proteins.

It localises to the periplasm. Solute-binding protein that binds (R)-pantoate and D-erythronate (in vitro). Probably part of a tripartite ATP-independent periplasmic (TRAP) transport system that mediates solute transport into the cytoplasm. The sequence is that of Solute-binding protein Veis_3954 from Verminephrobacter eiseniae (strain EF01-2).